The primary structure comprises 380 residues: Alcohol dehydrogenase 1 (380 aa).

Zn(2+) is bound by residues cysteine 48, threonine 50, histidine 70, cysteine 100, cysteine 103, cysteine 106, cysteine 114, and cysteine 178. Threonine 50 and histidine 70 together coordinate an alcohol. Threonine 50 lines the NAD(+) pocket. NAD(+) contacts are provided by residues 203 to 208 (GLGAVG), aspartate 227, arginine 232, threonine 273, valine 296, 296 to 298 (VGV), phenylalanine 323, and arginine 373.

It belongs to the zinc-containing alcohol dehydrogenase family. In terms of assembly, homodimer. Homotetramer. It depends on Zn(2+) as a cofactor.

Its subcellular location is the cytoplasm. The enzyme catalyses a primary alcohol + NAD(+) = an aldehyde + NADH + H(+). The catalysed reaction is a secondary alcohol + NAD(+) = a ketone + NADH + H(+). The polypeptide is Alcohol dehydrogenase 1 (ADH1) (Solanum tuberosum (Potato)).